The following is a 399-amino-acid chain: Elongation factor Tu (399 aa).

The tr-type G domain maps to 10–204 (KPHVNIGTIG…AVDASIPEPE (195 aa)). Residues 19 to 26 (GHVDHGKT) are G1. 19-26 (GHVDHGKT) serves as a coordination point for GTP. Residue threonine 26 participates in Mg(2+) binding. The segment at 60 to 64 (GITIN) is G2. Positions 81–84 (DCPG) are G3. GTP is bound by residues 81 to 85 (DCPGH) and 136 to 139 (NKCD). A G4 region spans residues 136–139 (NKCD). Residues 174–176 (SGL) are G5.

Belongs to the TRAFAC class translation factor GTPase superfamily. Classic translation factor GTPase family. EF-Tu/EF-1A subfamily. In terms of assembly, monomer.

Its subcellular location is the cytoplasm. It carries out the reaction GTP + H2O = GDP + phosphate + H(+). In terms of biological role, GTP hydrolase that promotes the GTP-dependent binding of aminoacyl-tRNA to the A-site of ribosomes during protein biosynthesis. The chain is Elongation factor Tu from Prochlorococcus marinus (strain SARG / CCMP1375 / SS120).